The sequence spans 589 residues: Malto-oligosyltrehalose trehalohydrolase (589 aa).

Position 256–261 (256–261 (GFDAVH)) interacts with substrate. Aspartate 258 functions as the Nucleophile in the catalytic mechanism. Residue glutamate 295 is the Proton donor of the active site. Substrate-binding positions include 320–324 (DDFHT) and 390–395 (HDQIGN).

This sequence belongs to the glycosyl hydrolase 13 family.

Its subcellular location is the cytoplasm. The catalysed reaction is hydrolysis of (1-&gt;4)-alpha-D-glucosidic linkage in 4-alpha-D-[(1-&gt;4)-alpha-D-glucanosyl]n trehalose to yield trehalose and (1-&gt;4)-alpha-D-glucan.. It participates in glycan biosynthesis; trehalose biosynthesis. The sequence is that of Malto-oligosyltrehalose trehalohydrolase (treZ) from Brevibacterium helvolum.